Here is a 261-residue protein sequence, read N- to C-terminus: MYRARAARAGPEPGSPGRFGILSTGQLRDLLQDEPKLDRIVRLSRKFQGLQLERDACLASNYALAKENLALRPRLEMGRTALAIKYQELREVAENCADKLQRLEKSMHRWSPQCALGWLQAELEEAEQEAEVQMEQLLLGEQSLEAFLPAFQRGRALAHLRRTQAEKLQEVLRRRERSAQPAPTTAAAAAAAATAMDPPKPFPAAAVLPTGAARGPPPAVPRSLPPLDSRPVPPVKGSPGCPFGPAPLLSPRPSQPEPPHR.

Positions 93–182 (AENCADKLQR…RRRERSAQPA (90 aa)) constitute a VPS37 C-terminal domain. Positions 172 to 261 (LRRRERSAQP…RPSQPEPPHR (90 aa)) are disordered. Residues 181–195 (PAPTTAAAAAAAATA) show a composition bias toward low complexity. Pro residues-rich tracts occupy residues 215-224 (GPPPAVPRSL) and 231-261 (PVPP…PPHR).

The protein belongs to the VPS37 family. As to quaternary structure, component of the ESCRT-I complex (endosomal sorting complex required for transport I) which consists of TSG101, VPS28, a VPS37 protein (VPS37A to -D) and MVB12A or MVB12B in a 1:1:1:1 stoichiometry. Interacts with TSG101 and MVB12A. Component of the ESCRT-I complex (endosomal sorting complex required for transport I) which consists of TSG101, VPS28, a VPS37 protein (VPS37A to -D) and UBAP1 in a 1:1:1:1 stoichiometry.

The protein localises to the late endosome membrane. In terms of biological role, component of the ESCRT-I complex, a regulator of vesicular trafficking process. Required for the sorting of endocytic ubiquitinated cargos into multivesicular bodies. May be involved in cell growth and differentiation. This Mus musculus (Mouse) protein is Vacuolar protein sorting-associated protein 37D.